The primary structure comprises 283 residues: Large ribosomal subunit protein uL2 (283 aa).

Disordered stretches follow at residues 1-59 (MSIK…GGHK) and 222-283 (RGVA…TGGQ).

Belongs to the universal ribosomal protein uL2 family. As to quaternary structure, part of the 50S ribosomal subunit. Forms a bridge to the 30S subunit in the 70S ribosome.

In terms of biological role, one of the primary rRNA binding proteins. Required for association of the 30S and 50S subunits to form the 70S ribosome, for tRNA binding and peptide bond formation. It has been suggested to have peptidyltransferase activity; this is somewhat controversial. Makes several contacts with the 16S rRNA in the 70S ribosome. This is Large ribosomal subunit protein uL2 from Salinibacter ruber (strain DSM 13855 / M31).